The following is a 142-amino-acid chain: Multiprotein-bridging factor 1b (142 aa).

Residues 49–75 (NAGSNKAASSGTSLNTKKLDDDTENLS) are disordered. A compositionally biased stretch (polar residues) spans 50 to 64 (AGSNKAASSGTSLNT). The span at 65–75 (KKLDDDTENLS) shows a compositional bias: basic and acidic residues. An HTH cro/C1-type domain is found at 87–141 (IMQARGEKKLTQSQLAHLINEKPQVIQEYESGKAIPNQQILSKLERALGAKLRGK). The segment at residues 98-117 (QSQLAHLINEKPQVIQEYES) is a DNA-binding region (H-T-H motif).

Belongs to the MBF1 family. Expressed in leaves, roots, stems, petioles and shoots. Higher expression in flowers and siliques. Detected in leaf veins through development.

It localises to the nucleus. The protein resides in the nucleolus. Functionally, transcriptional coactivator that stimulates transcriptional activity by bridging regulatory proteins and TBP, thereby recruiting TBP to promoters occupied by DNA-binding regulators. The sequence is that of Multiprotein-bridging factor 1b (MBF1B) from Arabidopsis thaliana (Mouse-ear cress).